We begin with the raw amino-acid sequence, 505 residues long: UDP-N-acetylmuramyl-tripeptide synthetase (505 aa).

Position 35 (Ser35) interacts with UDP-N-acetyl-alpha-D-muramoyl-L-alanyl-D-glutamate. 118–124 (GTDGKSS) lines the ATP pocket. Residues 163–164 (ST), Thr190, and Arg200 each bind UDP-N-acetyl-alpha-D-muramoyl-L-alanyl-D-glutamate. Position 232 is an N6-carboxylysine (Lys232).

It belongs to the MurCDEF family. MurE subfamily. In terms of processing, carboxylation is probably crucial for Mg(2+) binding and, consequently, for the gamma-phosphate positioning of ATP.

It localises to the cytoplasm. It participates in cell wall biogenesis; peptidoglycan biosynthesis. Functionally, catalyzes the addition of an amino acid to the nucleotide precursor UDP-N-acetylmuramoyl-L-alanyl-D-glutamate (UMAG) in the biosynthesis of bacterial cell-wall peptidoglycan. This is UDP-N-acetylmuramyl-tripeptide synthetase from Borreliella afzelii (strain PKo) (Borrelia afzelii).